Here is a 157-residue protein sequence, read N- to C-terminus: 6,7-dimethyl-8-ribityllumazine synthase (157 aa).

5-amino-6-(D-ribitylamino)uracil is bound by residues F30, 64–66 (ALE), and 88–90 (CII). 93–94 (ET) is a (2S)-2-hydroxy-3-oxobutyl phosphate binding site. Residue H96 is the Proton donor of the active site. N121 is a binding site for 5-amino-6-(D-ribitylamino)uracil. A (2S)-2-hydroxy-3-oxobutyl phosphate-binding site is contributed by R135.

This sequence belongs to the DMRL synthase family.

It catalyses the reaction (2S)-2-hydroxy-3-oxobutyl phosphate + 5-amino-6-(D-ribitylamino)uracil = 6,7-dimethyl-8-(1-D-ribityl)lumazine + phosphate + 2 H2O + H(+). Its pathway is cofactor biosynthesis; riboflavin biosynthesis; riboflavin from 2-hydroxy-3-oxobutyl phosphate and 5-amino-6-(D-ribitylamino)uracil: step 1/2. In terms of biological role, catalyzes the formation of 6,7-dimethyl-8-ribityllumazine by condensation of 5-amino-6-(D-ribitylamino)uracil with 3,4-dihydroxy-2-butanone 4-phosphate. This is the penultimate step in the biosynthesis of riboflavin. This is 6,7-dimethyl-8-ribityllumazine synthase from Albidiferax ferrireducens (strain ATCC BAA-621 / DSM 15236 / T118) (Rhodoferax ferrireducens).